A 406-amino-acid chain; its full sequence is MKKNVKKVVLAYSGGLDTSVILKWLEDNYKCEVVTFTADIGQNEDLKPIKEKALKLGIKKENIFIKDLREEFVRDYVFPMFRANAVYEGEYLLGTSIARPLISKYLVEIAKKTNADAIAHGATGKGNDQVRFELGAYALNPNIKVIAPWREWDLNSREKLLAYAEKNGIDIAKKKGKSPYSMDANLLHISYEGLVLEDPNHAPEADMWRWTTDPKLAPNESEIIEIEYKNGNPIALNGKNLKPHEMLNELNNLGAKHGIGRLDIVENRFVGMKSRGCYETPGGTIMLKAHRAIESITIDKGAAHLKDELMPKYAELIYNGFWFSPERSMLQALIDKSQEYVNGKVKLELYKGNVIVIGRESKSDTLFNVNFSTFEEDSVYNQKDAEGFIKLNALRFIIAGKNGRKI.

Residues 11 to 19 (AYSGGLDTS) and Ala-38 each bind ATP. Residues Tyr-91 and Ser-96 each coordinate L-citrulline. Gly-121 lines the ATP pocket. 3 residues coordinate L-aspartate: Thr-123, Asn-127, and Asp-128. Asn-127 is a binding site for L-citrulline. The L-citrulline site is built by Arg-131, Ser-181, Ser-190, Glu-266, and Tyr-278.

The protein belongs to the argininosuccinate synthase family. Type 1 subfamily. In terms of assembly, homotetramer.

Its subcellular location is the cytoplasm. It catalyses the reaction L-citrulline + L-aspartate + ATP = 2-(N(omega)-L-arginino)succinate + AMP + diphosphate + H(+). The protein operates within amino-acid biosynthesis; L-arginine biosynthesis; L-arginine from L-ornithine and carbamoyl phosphate: step 2/3. In Campylobacter hominis (strain ATCC BAA-381 / DSM 21671 / CCUG 45161 / LMG 19568 / NCTC 13146 / CH001A), this protein is Argininosuccinate synthase.